The following is a 307-amino-acid chain: Myeloid-associated differentiation marker-like protein 2 (307 aa).

MARVEL domains follow at residues 17–154 and 159–303; these read AVTS…ARPG and YMAT…RIRF. Helical transmembrane passes span 53–73, 90–110, 129–149, 163–183, 198–218, 232–252, and 278–298; these read FCMA…ACEF, AFAM…PLYF, LAAS…VALT, VSGL…GALV, VAVY…SVMG, VVYT…WPVF, and LVVA…LAYS.

This sequence belongs to the MAL family.

The protein localises to the membrane. This chain is Myeloid-associated differentiation marker-like protein 2 (Myadml2), found in Rattus norvegicus (Rat).